The chain runs to 136 residues: Keratin-associated protein 9-3 (136 aa).

11 tandem repeats follow at residues 3–7 (CCATS), 21–25 (CCQPT), 31–35 (CCQPS), 36–40 (CCEAS), 41–45 (CCQPS), 46–50 (CCETG), 87–91 (CCVVS), 97–101 (CCQLH), 107–111 (CCRPS), 117–121 (CCRPA), and 126–130 (CCQPS). The segment at 21-130 (CCQPTCTQSS…ACCCYCCQPS (110 aa)) is 11 X 5 AA repeats of C-C-[AEQVR]-[ALPTV]-[AGHST].

This sequence belongs to the KRTAP type 9 family. Interacts with hair keratins.

Its function is as follows. In the hair cortex, hair keratin intermediate filaments are embedded in an interfilamentous matrix, consisting of hair keratin-associated proteins (KRTAP), which are essential for the formation of a rigid and resistant hair shaft through their extensive disulfide bond cross-linking with abundant cysteine residues of hair keratins. The matrix proteins include the high-sulfur and high-glycine-tyrosine keratins. The protein is Keratin-associated protein 9-3 of Mus musculus (Mouse).